A 363-amino-acid chain; its full sequence is UDP-N-acetylglucosamine--N-acetylmuramyl-(pentapeptide) pyrophosphoryl-undecaprenol N-acetylglucosamine transferase (363 aa).

UDP-N-acetyl-alpha-D-glucosamine-binding positions include Thr-14–Gly-16, Asn-122, Arg-163, Ser-190, and Gln-285.

It belongs to the glycosyltransferase 28 family. MurG subfamily.

Its subcellular location is the cell inner membrane. It carries out the reaction di-trans,octa-cis-undecaprenyl diphospho-N-acetyl-alpha-D-muramoyl-L-alanyl-D-glutamyl-meso-2,6-diaminopimeloyl-D-alanyl-D-alanine + UDP-N-acetyl-alpha-D-glucosamine = di-trans,octa-cis-undecaprenyl diphospho-[N-acetyl-alpha-D-glucosaminyl-(1-&gt;4)]-N-acetyl-alpha-D-muramoyl-L-alanyl-D-glutamyl-meso-2,6-diaminopimeloyl-D-alanyl-D-alanine + UDP + H(+). The protein operates within cell wall biogenesis; peptidoglycan biosynthesis. Cell wall formation. Catalyzes the transfer of a GlcNAc subunit on undecaprenyl-pyrophosphoryl-MurNAc-pentapeptide (lipid intermediate I) to form undecaprenyl-pyrophosphoryl-MurNAc-(pentapeptide)GlcNAc (lipid intermediate II). The sequence is that of UDP-N-acetylglucosamine--N-acetylmuramyl-(pentapeptide) pyrophosphoryl-undecaprenol N-acetylglucosamine transferase from Prochlorococcus marinus (strain MIT 9301).